The following is a 156-amino-acid chain: Prolamin PPROL 17D (156 aa).

An N-terminal signal peptide occupies residues 1 to 19; that stretch reads MKIIFFFALLAIAACSASA. Position 20 is a pyrrolidone carboxylic acid (Gln-20).

The protein belongs to the prolamin family.

Its subcellular location is the vacuole. The protein localises to the aleurone grain. Seed storage protein; serves as a source of nitrogen, carbon and sulfur for the young developing seedling. The sequence is that of Prolamin PPROL 17D from Oryza sativa subsp. japonica (Rice).